A 127-amino-acid chain; its full sequence is Small ribosomal subunit protein uS11 (127 aa).

It belongs to the universal ribosomal protein uS11 family. As to quaternary structure, part of the 30S ribosomal subunit. Interacts with proteins S7 and S18. Binds to IF-3.

In terms of biological role, located on the platform of the 30S subunit, it bridges several disparate RNA helices of the 16S rRNA. Forms part of the Shine-Dalgarno cleft in the 70S ribosome. The sequence is that of Small ribosomal subunit protein uS11 from Streptococcus pyogenes serotype M1.